The primary structure comprises 190 residues: MRNMHTNRRSPGPITSAATQRRLKPEPEPTVKKFIKIILLSRIIEKMMKVPARFVRFGPKLTDNVTLQTPVGFKRSIRIKRIGDEVWFEKGWSEFAEAHSLSDGHFLFFHYEGDSCFRVVIFDVSASEIEYPLDDTDDNREEVMDDDEQGFTGFESSDDDGEVVDMDELLKKKKKKPRVNIKSENVIILD.

The interval 1–27 is disordered; it reads MRNMHTNRRSPGPITSAATQRRLKPEP. The TF-B3 DNA-binding region spans 33 to 125; that stretch reads KFIKIILLSR…CFRVVIFDVS (93 aa).

The protein resides in the nucleus. This is B3 domain-containing protein At1g49475 from Arabidopsis thaliana (Mouse-ear cress).